The primary structure comprises 218 residues: MLKYLIKFYPKILFIIEGTLVTLKYSIIAVILGLVIGMLLAICKVNKNCVLRLFANFYTSIFRGTPLLVQLSIIYFAAPYIISIKFSVFMAGVISFALNSGAYVSEVIRAGINTIDKGQFEAAEALAIPKFLIMKDIILPQAINNIFPSLVNELINLIKESAIISMLGEMDLMRRAQIVSIETYNYFFPMLIAACCYYILVMLISFIAKIIEKKMIVN.

An ABC transmembrane type-1 domain is found at threonine 19–alanine 208. Transmembrane regions (helical) follow at residues tyrosine 25–valine 45, phenylalanine 57–proline 79, phenylalanine 86–isoleucine 108, and phenylalanine 187–isoleucine 207.

It belongs to the binding-protein-dependent transport system permease family. HisMQ subfamily.

It is found in the cell inner membrane. Its function is as follows. Part of the binding-protein-dependent transport system for glutamine; probably responsible for the translocation of the substrate across the membrane. The chain is Putative glutamine transport system permease protein GlnP (glnP) from Rickettsia typhi (strain ATCC VR-144 / Wilmington).